A 250-amino-acid chain; its full sequence is 2,3-bisphosphoglycerate-dependent phosphoglycerate mutase (250 aa).

Residues 8 to 15 (RHGESQWN), 21 to 22 (TG), arginine 60, 87 to 90 (ERHY), lysine 98, 114 to 115 (RR), and 183 to 184 (GN) contribute to the substrate site. The active-site Tele-phosphohistidine intermediate is histidine 9. Glutamate 87 (proton donor/acceptor) is an active-site residue.

Belongs to the phosphoglycerate mutase family. BPG-dependent PGAM subfamily. As to quaternary structure, homodimer.

The enzyme catalyses (2R)-2-phosphoglycerate = (2R)-3-phosphoglycerate. Its pathway is carbohydrate degradation; glycolysis; pyruvate from D-glyceraldehyde 3-phosphate: step 3/5. Its function is as follows. Catalyzes the interconversion of 2-phosphoglycerate and 3-phosphoglycerate. In Bordetella avium (strain 197N), this protein is 2,3-bisphosphoglycerate-dependent phosphoglycerate mutase.